Reading from the N-terminus, the 187-residue chain is Ribosome-recycling factor (187 aa).

A disordered region spans residues 141–169; sequence LKKGNKNGDFNDDEFHDLEKKVQNETDAG.

This sequence belongs to the RRF family.

Its subcellular location is the cytoplasm. Its function is as follows. Responsible for the release of ribosomes from messenger RNA at the termination of protein biosynthesis. May increase the efficiency of translation by recycling ribosomes from one round of translation to another. This is Ribosome-recycling factor from Limosilactobacillus reuteri (strain DSM 20016) (Lactobacillus reuteri).